Reading from the N-terminus, the 81-residue chain is MTDPFTNPDKTLDAQGLRCPEPVMMVRKTVRQMETGQTLLIIADDPATTRDIPGFCVYMEHELLAQETEQVPYRYLLRKGQ.

The active-site Cysteine persulfide intermediate is Cys19.

This sequence belongs to the sulfur carrier protein TusA family. Interacts with IscS.

The protein resides in the cytoplasm. The protein operates within tRNA modification. Functionally, sulfur carrier protein involved in sulfur trafficking in the cell. Part of a sulfur-relay system required for 2-thiolation during synthesis of 2-thiouridine of the modified wobble base 5-methylaminomethyl-2-thiouridine (mnm(5)s(2)U) in tRNA. Interacts with IscS and stimulates its cysteine desulfurase activity. Accepts an activated sulfur from IscS, which is then transferred to TusD, and thus determines the direction of sulfur flow from IscS to 2-thiouridine formation. Also appears to be involved in sulfur transfer for the biosynthesis of molybdopterin. This is Sulfur carrier protein TusA from Pectobacterium atrosepticum (strain SCRI 1043 / ATCC BAA-672) (Erwinia carotovora subsp. atroseptica).